The primary structure comprises 315 residues: tRNA pseudouridine synthase B (315 aa).

Position 42 (H42) interacts with substrate. D47 functions as the Nucleophile in the catalytic mechanism. Substrate is bound by residues Y75, Y178, and L199.

Belongs to the pseudouridine synthase TruB family. Type 1 subfamily.

It carries out the reaction uridine(55) in tRNA = pseudouridine(55) in tRNA. Responsible for synthesis of pseudouridine from uracil-55 in the psi GC loop of transfer RNAs. This Photorhabdus laumondii subsp. laumondii (strain DSM 15139 / CIP 105565 / TT01) (Photorhabdus luminescens subsp. laumondii) protein is tRNA pseudouridine synthase B.